Consider the following 200-residue polypeptide: dTTP/UTP pyrophosphatase (200 aa).

The Proton acceptor role is filled by Asp72.

Belongs to the Maf family. YhdE subfamily. Requires a divalent metal cation as cofactor.

The protein resides in the cytoplasm. The catalysed reaction is dTTP + H2O = dTMP + diphosphate + H(+). It carries out the reaction UTP + H2O = UMP + diphosphate + H(+). Its function is as follows. Nucleoside triphosphate pyrophosphatase that hydrolyzes dTTP and UTP. May have a dual role in cell division arrest and in preventing the incorporation of modified nucleotides into cellular nucleic acids. This is dTTP/UTP pyrophosphatase from Pseudomonas syringae pv. syringae (strain B728a).